Here is a 430-residue protein sequence, read N- to C-terminus: Probable aspartic-type endopeptidase TRV_06366 (430 aa).

Residues 1–17 form the signal peptide; the sequence is MHVSTLLVAVLLPLALS. Residues 18–87 constitute a propeptide, activation peptide; it reads KPTPRKKTSS…SKATAGSGKE (70 aa). Residues 61-104 are disordered; it reads HEMEGYHPQPISKLPGNSKATAGSGKEGVESQDEKGEVVNNPTD. Residues 87–104 are compositionally biased toward basic and acidic residues; it reads EGVESQDEKGEVVNNPTD. The 319-residue stretch at 109–427 folds into the Peptidase A1 domain; sequence FLSPVTIGGQ…DQRGPSISLA (319 aa). Residue aspartate 125 is part of the active site. An N-linked (GlcNAc...) asparagine glycan is attached at asparagine 306. Aspartate 314 is an active-site residue.

Belongs to the peptidase A1 family.

It localises to the secreted. In terms of biological role, probable secreted aspartic-type endopeptidase which contributes to virulence. This is Probable aspartic-type endopeptidase TRV_06366 from Trichophyton verrucosum (strain HKI 0517).